Here is a 312-residue protein sequence, read N- to C-terminus: Lipoyl synthase (312 aa).

[4Fe-4S] cluster-binding residues include cysteine 37, cysteine 42, cysteine 48, cysteine 67, cysteine 71, cysteine 74, and serine 281. A Radical SAM core domain is found at 52-270 (RDGPGTATFM…AVAEREFDFL (219 aa)).

Belongs to the radical SAM superfamily. Lipoyl synthase family. [4Fe-4S] cluster serves as cofactor.

It is found in the cytoplasm. It catalyses the reaction [[Fe-S] cluster scaffold protein carrying a second [4Fe-4S](2+) cluster] + N(6)-octanoyl-L-lysyl-[protein] + 2 oxidized [2Fe-2S]-[ferredoxin] + 2 S-adenosyl-L-methionine + 4 H(+) = [[Fe-S] cluster scaffold protein] + N(6)-[(R)-dihydrolipoyl]-L-lysyl-[protein] + 4 Fe(3+) + 2 hydrogen sulfide + 2 5'-deoxyadenosine + 2 L-methionine + 2 reduced [2Fe-2S]-[ferredoxin]. Its pathway is protein modification; protein lipoylation via endogenous pathway; protein N(6)-(lipoyl)lysine from octanoyl-[acyl-carrier-protein]: step 2/2. In terms of biological role, catalyzes the radical-mediated insertion of two sulfur atoms into the C-6 and C-8 positions of the octanoyl moiety bound to the lipoyl domains of lipoate-dependent enzymes, thereby converting the octanoylated domains into lipoylated derivatives. The sequence is that of Lipoyl synthase from Halorubrum lacusprofundi (strain ATCC 49239 / DSM 5036 / JCM 8891 / ACAM 34).